The sequence spans 287 residues: Bifunctional protein FolD (287 aa).

NADP(+) contacts are provided by residues 166-168 (GAS) and Ile232.

This sequence belongs to the tetrahydrofolate dehydrogenase/cyclohydrolase family. As to quaternary structure, homodimer.

The catalysed reaction is (6R)-5,10-methylene-5,6,7,8-tetrahydrofolate + NADP(+) = (6R)-5,10-methenyltetrahydrofolate + NADPH. It catalyses the reaction (6R)-5,10-methenyltetrahydrofolate + H2O = (6R)-10-formyltetrahydrofolate + H(+). It participates in one-carbon metabolism; tetrahydrofolate interconversion. Functionally, catalyzes the oxidation of 5,10-methylenetetrahydrofolate to 5,10-methenyltetrahydrofolate and then the hydrolysis of 5,10-methenyltetrahydrofolate to 10-formyltetrahydrofolate. The protein is Bifunctional protein FolD of Aeromonas hydrophila subsp. hydrophila (strain ATCC 7966 / DSM 30187 / BCRC 13018 / CCUG 14551 / JCM 1027 / KCTC 2358 / NCIMB 9240 / NCTC 8049).